A 167-amino-acid chain; its full sequence is Signal peptidase complex subunit 3A (167 aa).

The Cytoplasmic segment spans residues 1–11 (MHTFGYRANAL). Residues 12 to 32 (LTFAVTALAFICAIASFSDKF) traverse the membrane as a helical; Signal-anchor for type II membrane protein segment. Topologically, residues 33-167 (SNQNPSAEIQ…PGYSLPDAYR (135 aa)) are lumenal. Asn136 is a glycosylation site (N-linked (GlcNAc...) asparagine).

It belongs to the SPCS3 family. As to quaternary structure, component of the signal peptidase complex (SPC) composed of a catalytic subunit SEC11 and three accessory subunits SPCS1, SPCS2 and SPCS3. The complex induces a local thinning of the ER membrane which is used to measure the length of the signal peptide (SP) h-region of protein substrates. This ensures the selectivity of the complex towards h-regions shorter than 18-20 amino acids.

It is found in the endoplasmic reticulum membrane. In terms of biological role, essential component of the signal peptidase complex (SPC) which catalyzes the cleavage of N-terminal signal sequences from nascent proteins as they are translocated into the lumen of the endoplasmic reticulum. Essential for the SPC catalytic activity, possibly by stabilizing and positioning the active center of the complex close to the lumenal surface. This is Signal peptidase complex subunit 3A from Arabidopsis thaliana (Mouse-ear cress).